We begin with the raw amino-acid sequence, 401 residues long: Chromate transport protein (401 aa).

A run of 12 helical transmembrane segments spans residues 26 to 46, 67 to 87, 93 to 113, 124 to 144, 172 to 192, 214 to 234, 237 to 257, 272 to 294, 299 to 321, 330 to 350, 356 to 376, and 379 to 399; these read LVMY…ALAG, GLAL…IYLG, IVGA…MVLA, LTWM…IIAI, VITE…VWFW, AASG…GVFF, AGAF…GGVV, VAVA…YLVA, ACVA…APYF, ILAF…GAVI, SIVD…LLKF, and LSEP…YPLL.

This sequence belongs to the chromate ion transporter (CHR) (TC 2.A.51) family.

The protein resides in the cell inner membrane. Its function is as follows. This protein reduces chromate accumulation and is essential for chromate resistance. This Cupriavidus metallidurans (strain ATCC 43123 / DSM 2839 / NBRC 102507 / CH34) (Ralstonia metallidurans) protein is Chromate transport protein.